Consider the following 637-residue polypeptide: Chaperone protein HtpG (637 aa).

An a; substrate-binding region spans residues 1–345 (MSQQETHGFQ…SNDLPLNVSR (345 aa)). Positions 346 to 562 (EILQDNHVTK…DGEMSTQMIK (217 aa)) are b. Residues 563 to 637 (LMQAAGQPVP…MNQMLLANMK (75 aa)) are c.

This sequence belongs to the heat shock protein 90 family. Homodimer.

It localises to the cytoplasm. In terms of biological role, molecular chaperone. Has ATPase activity. This is Chaperone protein HtpG from Shewanella baltica (strain OS155 / ATCC BAA-1091).